Reading from the N-terminus, the 683-residue chain is DNA ligase (683 aa).

Residues D44 to D48, S93 to L94, and E127 each bind NAD(+). The active-site N6-AMP-lysine intermediate is K129. Positions 150, 187, 302, and 326 each coordinate NAD(+). C420, C423, C438, and C444 together coordinate Zn(2+). Positions R601–Q683 constitute a BRCT domain.

This sequence belongs to the NAD-dependent DNA ligase family. LigA subfamily. Requires Mg(2+) as cofactor. Mn(2+) serves as cofactor.

It carries out the reaction NAD(+) + (deoxyribonucleotide)n-3'-hydroxyl + 5'-phospho-(deoxyribonucleotide)m = (deoxyribonucleotide)n+m + AMP + beta-nicotinamide D-nucleotide.. Its function is as follows. DNA ligase that catalyzes the formation of phosphodiester linkages between 5'-phosphoryl and 3'-hydroxyl groups in double-stranded DNA using NAD as a coenzyme and as the energy source for the reaction. It is essential for DNA replication and repair of damaged DNA. This is DNA ligase from Trichlorobacter lovleyi (strain ATCC BAA-1151 / DSM 17278 / SZ) (Geobacter lovleyi).